A 273-amino-acid polypeptide reads, in one-letter code: Dermonecrotic toxin LapSicTox-alphaII1 (273 aa).

Histidine 5 is an active-site residue. Mg(2+)-binding residues include glutamate 25 and aspartate 27. Catalysis depends on histidine 41, which acts as the Nucleophile. Intrachain disulfides connect cysteine 45/cysteine 51 and cysteine 47/cysteine 191. Aspartate 85 contacts Mg(2+).

This sequence belongs to the arthropod phospholipase D family. Class II subfamily. It depends on Mg(2+) as a cofactor. Expressed by the venom gland.

The protein localises to the secreted. It carries out the reaction an N-(acyl)-sphingosylphosphocholine = an N-(acyl)-sphingosyl-1,3-cyclic phosphate + choline. The enzyme catalyses an N-(acyl)-sphingosylphosphoethanolamine = an N-(acyl)-sphingosyl-1,3-cyclic phosphate + ethanolamine. The catalysed reaction is a 1-acyl-sn-glycero-3-phosphocholine = a 1-acyl-sn-glycero-2,3-cyclic phosphate + choline. It catalyses the reaction a 1-acyl-sn-glycero-3-phosphoethanolamine = a 1-acyl-sn-glycero-2,3-cyclic phosphate + ethanolamine. Dermonecrotic toxins cleave the phosphodiester linkage between the phosphate and headgroup of certain phospholipids (sphingolipid and lysolipid substrates), forming an alcohol (often choline) and a cyclic phosphate. This toxin acts on sphingomyelin (SM). It may also act on ceramide phosphoethanolamine (CPE), lysophosphatidylcholine (LPC) and lysophosphatidylethanolamine (LPE), but not on lysophosphatidylserine (LPS), and lysophosphatidylglycerol (LPG). It acts by transphosphatidylation, releasing exclusively cyclic phosphate products as second products. Induces dermonecrosis, hemolysis, increased vascular permeability, edema, inflammatory response, and platelet aggregation. This Loxosceles apachea (Apache recluse spider) protein is Dermonecrotic toxin LapSicTox-alphaII1.